The sequence spans 296 residues: Light-inducible protein CPRF3 (296 aa).

Disordered stretches follow at residues 1–27, 98–165, and 190–223; these read MSDG…ITTT, PNLA…GSLE, and RVND…KSDE. Positions 107 to 117 are enriched in basic and acidic residues; sequence VGRKISDEKGR. Low complexity predominate over residues 145 to 156; it reads SSSDNDCPSLSS. The bZIP domain occupies 196-259; the sequence is ELKRQRRKQS…AEVTSENHSI (64 aa). Residues 198 to 220 are basic motif; that stretch reads KRQRRKQSNRESARRSRLRKQAK. Positions 224 to 245 are leucine-zipper; it reads LQERLDNLSKENRILRKNLQRI.

The protein belongs to the bZIP family. As to quaternary structure, binds DNA as a dimer.

Its subcellular location is the nucleus. Its function is as follows. Binds to the G-box-like motif (5'-ACGTGGC-3') of the chalcone synthase (CHS) gene promoter. G-box and G-box-like motifs are defined in promoters of certain plant genes which are regulated by such diverse stimuli as light-induction or hormone control. This Petroselinum crispum (Parsley) protein is Light-inducible protein CPRF3 (CPRF3).